The primary structure comprises 289 residues: S-methyl-5'-thioadenosine phosphorylase (289 aa).

Residues Ser11, 53-54, and 86-87 each bind phosphate; these read RH and SA. Residue Met187 coordinates substrate. Residue Thr188 coordinates phosphate. 211–213 is a binding site for substrate; the sequence is DYD.

It belongs to the PNP/MTAP phosphorylase family. MTAP subfamily. Homohexamer. Dimer of a homotrimer.

The enzyme catalyses S-methyl-5'-thioadenosine + phosphate = 5-(methylsulfanyl)-alpha-D-ribose 1-phosphate + adenine. It functions in the pathway amino-acid biosynthesis; L-methionine biosynthesis via salvage pathway; S-methyl-5-thio-alpha-D-ribose 1-phosphate from S-methyl-5'-thioadenosine (phosphorylase route): step 1/1. Functionally, catalyzes the reversible phosphorylation of S-methyl-5'-thioadenosine (MTA) to adenine and 5-methylthioribose-1-phosphate. Involved in the breakdown of MTA, a major by-product of polyamine biosynthesis. Responsible for the first step in the methionine salvage pathway after MTA has been generated from S-adenosylmethionine. Has broad substrate specificity with 6-aminopurine nucleosides as preferred substrates. The protein is S-methyl-5'-thioadenosine phosphorylase of Thermosynechococcus vestitus (strain NIES-2133 / IAM M-273 / BP-1).